Here is a 352-residue protein sequence, read N- to C-terminus: S-norcoclaurine synthase 1 (352 aa).

Positions 200-304 constitute a Fe2OG dioxygenase domain; that stretch reads KPLRTVFNRE…RLSIAAFHDP (105 aa). 3 residues coordinate Fe cation: histidine 228, aspartate 230, and histidine 285.

The protein belongs to the iron/ascorbate-dependent oxidoreductase family. As to quaternary structure, monomer. The cofactor is Fe cation.

It carries out the reaction (4-hydroxyphenyl)acetaldehyde + dopamine = (S)-norcoclaurine + H2O. Inhibited by O-phenanthroline, but not by EDTA. Functionally, involved in the biosynthesis of the common precursor of all benzylisoquinoline alkaloids such as morphine, sanguinarine, codeine or berberine. Condenses dopamine and phenylacetaldehyde, 3,4-dihydrophenylacetaldehyde or 4-hydroxyphenylacetaldehyde. This Coptis japonica (Japanese goldthread) protein is S-norcoclaurine synthase 1 (NCS1).